We begin with the raw amino-acid sequence, 106 residues long: MSNTEHNVESKNVTDTLDEILRLQEDIQARIGSSNHNLETNFESIKDFVSRAHAYIPILNQISKDMIEICERTQALKKKTSQLELSDTNIEDGSTTSTPTTTNKSQ.

The interval 78 to 106 (KKTSQLELSDTNIEDGSTTSTPTTTNKSQ) is disordered. The segment covering 82 to 93 (QLELSDTNIEDG) has biased composition (polar residues). Over residues 94–106 (STTSTPTTTNKSQ) the composition is skewed to low complexity.

The protein belongs to the BLOC1S6 family. As to quaternary structure, homodimer (isoform 1). Component of the biogenesis of lysosome-related organelles complex-1 (BLOC-1) composed at least of blos-1, blos-2, blos-4, dsbn-1, glo-2, mutd-1 and snpn-1. Isoform 1 interacts with blos-1 and blos-4.

It is found in the cytoplasm. It localises to the endosome. Component of the biogenesis of lysosome-related organelles complex-1 (BLOC-1) involved in gut granule biogenesis. This chain is Biogenesis of lysosome-related organelles complex 1 subunit 6 (glo-2), found in Caenorhabditis elegans.